We begin with the raw amino-acid sequence, 183 residues long: ATP synthase subunit delta (183 aa).

It belongs to the ATPase delta chain family. In terms of assembly, F-type ATPases have 2 components, F(1) - the catalytic core - and F(0) - the membrane proton channel. F(1) has five subunits: alpha(3), beta(3), gamma(1), delta(1), epsilon(1). F(0) has three main subunits: a(1), b(2) and c(10-14). The alpha and beta chains form an alternating ring which encloses part of the gamma chain. F(1) is attached to F(0) by a central stalk formed by the gamma and epsilon chains, while a peripheral stalk is formed by the delta and b chains.

The protein localises to the cell inner membrane. F(1)F(0) ATP synthase produces ATP from ADP in the presence of a proton or sodium gradient. F-type ATPases consist of two structural domains, F(1) containing the extramembraneous catalytic core and F(0) containing the membrane proton channel, linked together by a central stalk and a peripheral stalk. During catalysis, ATP synthesis in the catalytic domain of F(1) is coupled via a rotary mechanism of the central stalk subunits to proton translocation. Functionally, this protein is part of the stalk that links CF(0) to CF(1). It either transmits conformational changes from CF(0) to CF(1) or is implicated in proton conduction. This is ATP synthase subunit delta from Verminephrobacter eiseniae (strain EF01-2).